Reading from the N-terminus, the 650-residue chain is SPARC-like protein 1 (650 aa).

The signal sequence occupies residues 1 to 16; the sequence is MKAVLLLLCALGTAVA. The interval 51 to 352 is disordered; sequence TADIENHPSD…HGAGDDYFIP (302 aa). Residues 54–64 show a composition bias toward basic and acidic residues; that stretch reads IENHPSDKAEK. 3 positions are modified to phosphoserine: Ser70, Ser78, and Ser86. Over residues 75-85 the composition is skewed to basic and acidic residues; it reads HEQSTEQDKTY. Residues 91–101 are compositionally biased toward acidic residues; it reads LKDEEDGDGDL. Polar residues-rich tracts occupy residues 116-126 and 135-148; these read EGTSEPQQKSL and TVSTSYVDPNQRAN. Asn148 carries N-linked (GlcNAc...) asparagine glycosylation. Ser155 and Ser163 each carry phosphoserine. The span at 157–174 shows a compositional bias: polar residues; that stretch reads EQPVSDSHQQPNESSKQT. An N-linked (GlcNAc...) asparagine glycan is attached at Asn168. A compositionally biased stretch (acidic residues) spans 189–210; it reads IPNEEEEEEEDEEEEEEEEPED. Position 272 is a phosphoserine (Ser272). The segment covering 277-299 has biased composition (basic and acidic residues); that stretch reads EDKAAGSKEHIPHTEQQDQEGKA. Position 353 is a phosphoserine (Ser353). The interval 375-415 is disordered; sequence EETTTGESENRREAADNQEAKKAESSPNAEPSDEGNSREHS. The span at 382–398 shows a compositional bias: basic and acidic residues; that stretch reads SENRREAADNQEAKKAE. Residue Ser406 is modified to Phosphoserine. Residues 418–440 form the Follistatin-like domain; the sequence is SCTNFQCKRGHICKTDPQGKPHC. 7 disulfides stabilise this stretch: Cys419–Cys430, Cys424–Cys440, Cys442–Cys476, Cys448–Cys469, Cys458–Cys495, Cys501–Cys612, and Cys620–Cys636. The 62-residue stretch at 436 to 497 folds into the Kazal-like domain; the sequence is GKPHCVCQDP…QLDYFGACKS (62 aa). An N-linked (GlcNAc...) asparagine glycan is attached at Asn462. Positions 608 to 643 constitute an EF-hand domain; the sequence is PMEHCITRFFEECDPNKDKHITLKEWGHCFGIKEED. Residues Asp621, Asn623, Asp625, His627, and Glu632 each coordinate Ca(2+).

This sequence belongs to the SPARC family. As to expression, highest expression in brain. Moderate levels in heart, adrenal gland, epididymis and lung. Low levels in kidney, eye, liver, spleen, submandibular gland and testis.

Its subcellular location is the secreted. The protein localises to the extracellular space. The protein resides in the extracellular matrix. This is SPARC-like protein 1 (Sparcl1) from Mus musculus (Mouse).